The following is a 483-amino-acid chain: Aspartyl/glutamyl-tRNA(Asn/Gln) amidotransferase subunit B (483 aa).

It belongs to the GatB/GatE family. GatB subfamily. In terms of assembly, heterotrimer of A, B and C subunits.

It catalyses the reaction L-glutamyl-tRNA(Gln) + L-glutamine + ATP + H2O = L-glutaminyl-tRNA(Gln) + L-glutamate + ADP + phosphate + H(+). The enzyme catalyses L-aspartyl-tRNA(Asn) + L-glutamine + ATP + H2O = L-asparaginyl-tRNA(Asn) + L-glutamate + ADP + phosphate + 2 H(+). Allows the formation of correctly charged Asn-tRNA(Asn) or Gln-tRNA(Gln) through the transamidation of misacylated Asp-tRNA(Asn) or Glu-tRNA(Gln) in organisms which lack either or both of asparaginyl-tRNA or glutaminyl-tRNA synthetases. The reaction takes place in the presence of glutamine and ATP through an activated phospho-Asp-tRNA(Asn) or phospho-Glu-tRNA(Gln). This Roseiflexus castenholzii (strain DSM 13941 / HLO8) protein is Aspartyl/glutamyl-tRNA(Asn/Gln) amidotransferase subunit B.